The following is a 304-amino-acid chain: UTP--glucose-1-phosphate uridylyltransferase 1 (304 aa).

Belongs to the UDPGP type 2 family.

The enzyme catalyses alpha-D-glucose 1-phosphate + UTP + H(+) = UDP-alpha-D-glucose + diphosphate. Its pathway is carbohydrate metabolism; nucleotide-sugar metabolism. The protein is UTP--glucose-1-phosphate uridylyltransferase 1 (hasC1) of Streptococcus pyogenes serotype M3 (strain ATCC BAA-595 / MGAS315).